Reading from the N-terminus, the 498-residue chain is Cytochrome P450 71B24 (498 aa).

The chain crosses the membrane as a helical span at residues 1-21; the sequence is MSILLYFIALLSLIIIKKIKD. Position 442 (cysteine 442) interacts with heme.

This sequence belongs to the cytochrome P450 family. It depends on heme as a cofactor.

Its subcellular location is the membrane. The polypeptide is Cytochrome P450 71B24 (CYP71B24) (Arabidopsis thaliana (Mouse-ear cress)).